The primary structure comprises 515 residues: Bifunctional purine biosynthesis protein PurH (515 aa).

The region spanning 1-145 (MTKRVLISVS…KNHASVTVVV (145 aa)) is the MGS-like domain.

It belongs to the PurH family.

It carries out the reaction (6R)-10-formyltetrahydrofolate + 5-amino-1-(5-phospho-beta-D-ribosyl)imidazole-4-carboxamide = 5-formamido-1-(5-phospho-D-ribosyl)imidazole-4-carboxamide + (6S)-5,6,7,8-tetrahydrofolate. The catalysed reaction is IMP + H2O = 5-formamido-1-(5-phospho-D-ribosyl)imidazole-4-carboxamide. It functions in the pathway purine metabolism; IMP biosynthesis via de novo pathway; 5-formamido-1-(5-phospho-D-ribosyl)imidazole-4-carboxamide from 5-amino-1-(5-phospho-D-ribosyl)imidazole-4-carboxamide (10-formyl THF route): step 1/1. Its pathway is purine metabolism; IMP biosynthesis via de novo pathway; IMP from 5-formamido-1-(5-phospho-D-ribosyl)imidazole-4-carboxamide: step 1/1. This chain is Bifunctional purine biosynthesis protein PurH, found in Streptococcus pneumoniae serotype 2 (strain D39 / NCTC 7466).